The chain runs to 311 residues: Cytosolic Fe-S cluster assembly factor Nubp1 homolog (311 aa).

A disordered region spans residues 1 to 21 (MQAPPPEHCPGVESEEAGKGS). The [4Fe-4S] cluster site is built by Cys-9, Cys-23, Cys-26, and Cys-32. Position 63-70 (63-70 (GKGGVGKS)) interacts with ATP. Cys-240 and Cys-243 together coordinate [4Fe-4S] cluster.

Belongs to the Mrp/NBP35 ATP-binding proteins family. NUBP1/NBP35 subfamily. In terms of assembly, heterotetramer of 2 Nubp1 and 2 Nubp2 chains. [4Fe-4S] cluster is required as a cofactor.

It is found in the cytoplasm. Its function is as follows. Component of the cytosolic iron-sulfur (Fe/S) protein assembly (CIA) machinery. Required for maturation of extramitochondrial Fe-S proteins. The Nubp1-Nubp2 heterotetramer forms a Fe-S scaffold complex, mediating the de novo assembly of an Fe-S cluster and its transfer to target apoproteins. This is Cytosolic Fe-S cluster assembly factor Nubp1 homolog from Drosophila melanogaster (Fruit fly).